Consider the following 139-residue polypeptide: Large ribosomal subunit protein uL16 (139 aa).

Over residues 1–17 (MLMPKRVKYRKSQRGRM) the composition is skewed to basic residues. The tract at residues 1-24 (MLMPKRVKYRKSQRGRMKGNSGRG) is disordered.

This sequence belongs to the universal ribosomal protein uL16 family. Part of the 50S ribosomal subunit.

Its function is as follows. Binds 23S rRNA and is also seen to make contacts with the A and possibly P site tRNAs. The polypeptide is Large ribosomal subunit protein uL16 (Chlorobium limicola (strain DSM 245 / NBRC 103803 / 6330)).